The chain runs to 446 residues: NADH-dependent phenylglyoxylate dehydrogenase subunit beta (446 aa).

4Fe-4S ferredoxin-type domains follow at residues 6–35, 49–80, 82–111, and 109–141; these read STIA…TDDI, ADKT…KDGT, GVIG…LDEA, and DEAT…HITT.

Dimer of heteropentamers composed of an alpha (PadG), a beta (PadI), a gamma (PadE), a delta (PadF) and an epsilon (PadH) subunit. Requires [4Fe-4S] cluster as cofactor.

The enzyme catalyses phenylglyoxylate + NAD(+) + CoA = benzoyl-CoA + CO2 + NADH. Activated by magnesium ions and thiamine diphosphate. Its function is as follows. Involved in the anaerobic metabolism of phenylalanine and phenylacetate. Catalyzes the oxidative decarboxylation of phenylglyoxylate to benzoyl-CoA and CO(2). It can also react slowly with 2-oxo-3-methylbutanoate and use different electron acceptors such as benzyl viologen, methyl viologen, FAD or FMN, but NAD seems to be the physiological electron acceptor. Also catalyzes an isotope exchange between CO(2) and the carboxyl group which proves partial or complete reversibility of the oxidative decarboxylation reaction. This chain is NADH-dependent phenylglyoxylate dehydrogenase subunit beta (padI), found in Aromatoleum evansii (Azoarcus evansii).